A 488-amino-acid chain; its full sequence is Katanin p60 ATPase-containing subunit A-like 1 (488 aa).

Position 1 is an N-acetylmethionine (Met1). Residues 128 to 179 form a disordered region; the sequence is GAGARGLVGRAHQISKSDKAASRDKDYRARGRDDKARKNMQDGASDGEIPKF. Positions 142–167 are enriched in basic and acidic residues; it reads SKSDKAASRDKDYRARGRDDKARKNM. Ser172 carries the post-translational modification Phosphoserine. Residue 246-253 participates in ATP binding; the sequence is GPPGTGKT.

The protein belongs to the AAA ATPase family. Katanin p60 subunit A1 subfamily. A-like 1 sub-subfamily. In terms of assembly, interacts with KATNB1 and KATNBL1.

Its subcellular location is the cytoplasm. It localises to the cytoskeleton. The protein resides in the spindle pole. The protein localises to the spindle. The catalysed reaction is n ATP + n H2O + a microtubule = n ADP + n phosphate + (n+1) alpha/beta tubulin heterodimers.. Regulates microtubule dynamics in Sertoli cells, a process that is essential for spermiogenesis and male fertility. Severs microtubules in an ATP-dependent manner, promoting rapid reorganization of cellular microtubule arrays. Has microtubule-severing activity in vitro. This is Katanin p60 ATPase-containing subunit A-like 1 (Katnal1) from Rattus norvegicus (Rat).